Here is a 711-residue protein sequence, read N- to C-terminus: Ribosomal RNA large subunit methyltransferase K/L (711 aa).

The THUMP domain maps to 43–154; that stretch reads TLYRTLLWSR…RENLVISLDL (112 aa).

Belongs to the methyltransferase superfamily. RlmKL family.

Its subcellular location is the cytoplasm. The enzyme catalyses guanosine(2445) in 23S rRNA + S-adenosyl-L-methionine = N(2)-methylguanosine(2445) in 23S rRNA + S-adenosyl-L-homocysteine + H(+). The catalysed reaction is guanosine(2069) in 23S rRNA + S-adenosyl-L-methionine = N(2)-methylguanosine(2069) in 23S rRNA + S-adenosyl-L-homocysteine + H(+). Specifically methylates the guanine in position 2445 (m2G2445) and the guanine in position 2069 (m7G2069) of 23S rRNA. This Haemophilus influenzae (strain ATCC 51907 / DSM 11121 / KW20 / Rd) protein is Ribosomal RNA large subunit methyltransferase K/L.